The following is a 614-amino-acid chain: Protein B602L (614 aa).

31 consecutive repeat copies span residues 161–164 (CAST), 165–168 (NADT), 169–172 (SAST), 173–176 (NADT), 177–180 (SAST), 181–184 (NASI), 185–188 (NADT), 189–192 (NVDT), 193–196 (CAST), 197–200 (NAST), 201–204 (NVDT), 205–208 (NASI), 209–212 (NAST), 213–216 (NAST), 217–220 (NVDT), 221–224 (NAST), 225–228 (NASI), 229–232 (NADT), 233–236 (NVDT), 237–240 (CAST), 241–244 (NAST), 245–248 (NVDT), 249–252 (NASI), 253–256 (NAST), 257–260 (NAST), 261–264 (NVDT), 265–268 (NADI), 269–272 (NANT), 273–276 (NADI), 277–280 (NANI), and 281–284 (NANT). The 28 X 4 AA tandem repeats of [CNS]-[AV]-[DNS]-[IT] stretch occupies residues 161–284 (CASTNADTSA…DINANINANT (124 aa)).

The protein belongs to the asfivirus B602L family.

It localises to the host cytoplasm. Plays an essential role in the assembly of the icosahedral capsid of the virus. Allows the assembly of 3 molecules of hexon protein p72 and formation of a thermostable trimer. This African swine fever virus (isolate Tick/Malawi/Lil 20-1/1983) (ASFV) protein is Protein B602L.